The following is a 135-amino-acid chain: MSKEFSRTQRVSQQLQKELAMILQREVRDSRLGMVTISDVEVSRDLAYAKVFVTFLCVGEQTPESCLAALREHEVHIRMMLGKRIRLRLTPEIRFYYDNTLVEGMRMSNLVSEVVNEDKRKQQDSGREEDQAGEE.

The segment at Val115–Glu135 is disordered. Over residues Asn116–Glu135 the composition is skewed to basic and acidic residues.

Belongs to the RbfA family. In terms of assembly, monomer. Binds 30S ribosomal subunits, but not 50S ribosomal subunits or 70S ribosomes.

It is found in the cytoplasm. In terms of biological role, one of several proteins that assist in the late maturation steps of the functional core of the 30S ribosomal subunit. Associates with free 30S ribosomal subunits (but not with 30S subunits that are part of 70S ribosomes or polysomes). Required for efficient processing of 16S rRNA. May interact with the 5'-terminal helix region of 16S rRNA. The polypeptide is Ribosome-binding factor A (Vibrio campbellii (strain ATCC BAA-1116)).